The following is a 455-amino-acid chain: Phosphoglucosamine mutase (455 aa).

Ser102 serves as the catalytic Phosphoserine intermediate. 4 residues coordinate Mg(2+): Ser102, Asp241, Asp243, and Asp245. Ser102 is modified (phosphoserine).

This sequence belongs to the phosphohexose mutase family. It depends on Mg(2+) as a cofactor. In terms of processing, activated by phosphorylation.

It catalyses the reaction alpha-D-glucosamine 1-phosphate = D-glucosamine 6-phosphate. Its function is as follows. Catalyzes the conversion of glucosamine-6-phosphate to glucosamine-1-phosphate. This is Phosphoglucosamine mutase from Legionella pneumophila (strain Corby).